The chain runs to 245 residues: Carbohydrate deacetylase (245 aa).

Mg(2+)-binding residues include His-59 and His-125.

It belongs to the YdjC deacetylase family. Homodimer. Requires Mg(2+) as cofactor.

Functionally, probably catalyzes the deacetylation of acetylated carbohydrates an important step in the degradation of oligosaccharides. The protein is Carbohydrate deacetylase of Listeria monocytogenes serotype 4a (strain HCC23).